The sequence spans 224 residues: Ribonuclease T (224 aa).

The Exonuclease domain maps to 32–206; that stretch reads VVVDVETGGF…YDTEKTAELF (175 aa). Asp-35, Glu-37, His-193, and Asp-198 together coordinate Mg(2+). The active-site Proton donor/acceptor is the His-193.

This sequence belongs to the RNase T family. In terms of assembly, homodimer. It depends on Mg(2+) as a cofactor.

Functionally, trims short 3' overhangs of a variety of RNA species, leaving a one or two nucleotide 3' overhang. Responsible for the end-turnover of tRNA: specifically removes the terminal AMP residue from uncharged tRNA (tRNA-C-C-A). Also appears to be involved in tRNA biosynthesis. The protein is Ribonuclease T of Pseudomonas fluorescens (strain Pf0-1).